The sequence spans 510 residues: Inositol-3-phosphate synthase (510 aa).

24 residues coordinate NAD(+): Gly-70, Gly-71, Asn-72, Asn-73, Asp-143, Ile-180, Gln-190, Arg-193, Thr-230, Ala-231, Asn-232, Thr-233, Gly-281, Ser-282, Asp-306, Ser-309, Asn-340, Asn-341, Asp-342, Lys-355, Ala-393, Asp-394, Asp-422, and Ser-423.

The protein belongs to the myo-inositol 1-phosphate synthase family. NAD(+) is required as a cofactor.

It is found in the cytoplasm. The protein resides in the cytosol. Its subcellular location is the nucleus. It carries out the reaction D-glucose 6-phosphate = 1D-myo-inositol 3-phosphate. The protein operates within polyol metabolism; myo-inositol biosynthesis; myo-inositol from D-glucose 6-phosphate: step 1/2. Key enzyme in myo-inositol biosynthesis pathway that catalyzes the conversion of glucose 6-phosphate to 1-myo-inositol 1-phosphate in a NAD-dependent manner. This chain is Inositol-3-phosphate synthase, found in Brassica napus (Rape).